The sequence spans 132 residues: Aspartate 1-decarboxylase (132 aa).

Serine 25 serves as the catalytic Schiff-base intermediate with substrate; via pyruvic acid. Serine 25 carries the pyruvic acid (Ser) modification. Threonine 57 lines the substrate pocket. The active-site Proton donor is tyrosine 58. Residue 73-75 (GAA) participates in substrate binding.

The protein belongs to the PanD family. Heterooctamer of four alpha and four beta subunits. Pyruvate is required as a cofactor. Post-translationally, is synthesized initially as an inactive proenzyme, which is activated by self-cleavage at a specific serine bond to produce a beta-subunit with a hydroxyl group at its C-terminus and an alpha-subunit with a pyruvoyl group at its N-terminus.

It is found in the cytoplasm. It catalyses the reaction L-aspartate + H(+) = beta-alanine + CO2. The protein operates within cofactor biosynthesis; (R)-pantothenate biosynthesis; beta-alanine from L-aspartate: step 1/1. Catalyzes the pyruvoyl-dependent decarboxylation of aspartate to produce beta-alanine. This chain is Aspartate 1-decarboxylase, found in Heliobacterium modesticaldum (strain ATCC 51547 / Ice1).